The sequence spans 565 residues: MELEYESKRSLYIPYAGPILLEFPLLNKGSAFSIEERNDFNLNGLLPETVESIEEQAERAWRQFQDFKNNNDKHVYLRNIQDTNETLFYRLLDNHLEEMMPIIYTPTVGAACEHFSEIYRRARGLFISYPNRANIEDMLQNATKQNVKVIVVTDGERILGLGDQGIGGMGIPIGKLSLYTACGGISPAYTLPVVLDVGTNNQQLLNDPLYMGWRHPRITGEEYDNFVNEFIQAVKSRWPNVLLQFEDFAQKNAMPLLERYRDEVCCFNDDIQGTAAVTLGTLIAASRAAGGKLCEQKVVFLGAGSAGCGIAEQIIAQMKSEGLSDEEARARVFMVDRFGLLTDRLPNLLNFQSRLVQKSDSLSGWDSANDSLSLLDVVRNAKPDIMIGVSGQPGLFSEEIVREMHKHCTRPIIMPLSNPTSRVEATPQDIMAWTDGCALVATGSPFSPVSWKDKTYPIAQCNNSYIFPGIGLGVIASGASRVTDSMLMAASRALADCSPLVNDGEGPVLPEVNDIQGVSKIIAMAVGKAAQLAGVAVVTSEDVLSKAIAANFWLPQYRNYRRTSI.

Y104 functions as the Proton donor in the catalytic mechanism. An NAD(+)-binding site is contributed by R157. The Proton acceptor role is filled by K175. Positions 246, 247, and 270 each coordinate a divalent metal cation. The NAD(+) site is built by D270 and N418.

The protein belongs to the malic enzymes family. As to quaternary structure, homotetramer. The cofactor is Mg(2+). Requires Mn(2+) as cofactor.

The enzyme catalyses (S)-malate + NAD(+) = pyruvate + CO2 + NADH. It catalyses the reaction oxaloacetate + H(+) = pyruvate + CO2. The protein is NAD-dependent malic enzyme of Erwinia tasmaniensis (strain DSM 17950 / CFBP 7177 / CIP 109463 / NCPPB 4357 / Et1/99).